Consider the following 557-residue polypeptide: Urocanate hydratase (557 aa).

NAD(+)-binding positions include 52–53 (GG), Gln-130, 176–178 (GMG), Glu-196, Arg-201, 242–243 (NA), 263–267 (QTSAH), 273–274 (YL), and Tyr-322. Cys-410 is a catalytic residue. Position 492 (Gly-492) interacts with NAD(+).

It belongs to the urocanase family. NAD(+) serves as cofactor.

Its subcellular location is the cytoplasm. The catalysed reaction is 4-imidazolone-5-propanoate = trans-urocanate + H2O. Its pathway is amino-acid degradation; L-histidine degradation into L-glutamate; N-formimidoyl-L-glutamate from L-histidine: step 2/3. Functionally, catalyzes the conversion of urocanate to 4-imidazolone-5-propionate. This is Urocanate hydratase from Pseudoalteromonas translucida (strain TAC 125).